The chain runs to 479 residues: Ribosomal RNA small subunit methyltransferase F (479 aa).

S-adenosyl-L-methionine-binding positions include 125–131 (AAAPGSK), E149, D176, and D194. C247 (nucleophile) is an active-site residue.

Belongs to the class I-like SAM-binding methyltransferase superfamily. RsmB/NOP family.

The protein localises to the cytoplasm. The enzyme catalyses cytidine(1407) in 16S rRNA + S-adenosyl-L-methionine = 5-methylcytidine(1407) in 16S rRNA + S-adenosyl-L-homocysteine + H(+). Specifically methylates the cytosine at position 1407 (m5C1407) of 16S rRNA. The sequence is that of Ribosomal RNA small subunit methyltransferase F from Salmonella typhi.